We begin with the raw amino-acid sequence, 246 residues long: mRNA-decapping protein g5R (246 aa).

Positions 93–239 constitute a Nudix hydrolase domain; that stretch reads QKFRKNWLLP…IIGPAFNFIK (147 aa). A Nudix box motif is present at residues 128–149; it reads GKPKEDESDLTCAIREFEEETG. Glu-134 is a Mg(2+) binding site. Residue Glu-143 is the Nucleophile of the active site. Positions 147 and 169 each coordinate Mg(2+).

It belongs to the Nudix hydrolase family. DIPP subfamily. Interacts with host RPL23A. Mg(2+) serves as cofactor. It depends on Mn(2+) as a cofactor.

It is found in the host rough endoplasmic reticulum. It carries out the reaction diphospho-myo-inositol polyphosphate + H2O = myo-inositol polyphosphate + phosphate.. In terms of biological role, decapping enzyme required for the removal of the 5'-end m7GpppN cap tethered to viral and host mRNAs to allow their decay in cells. May therefore accelerate viral and cellular mRNA turnover to eliminate competing host mRNAs and allow stage-specific synthesis of viral proteins. Acceleration of the turnover of cellular transcripts may even promote the shutoff of host protein synthesis. In addition to the mRNA cap, g5R also efficiently hydrolyzes diphosphoinositol polyphosphates. Down-regulation of the level of PP-InsP5 (diphosphoinositol pentakisphosphate) may play a role in viral manipulation of the cellular secretory pathway, a step necessary for the formation of virions. Binds viral and cellular poly(A) mRNAs, thereby decreasing both types of mRNAs. This African swine fever virus (isolate Warthog/Namibia/Wart80/1980) (ASFV) protein is mRNA-decapping protein g5R.